A 515-amino-acid chain; its full sequence is Maturase K (515 aa).

The protein belongs to the intron maturase 2 family. MatK subfamily.

It localises to the plastid. It is found in the chloroplast. Functionally, usually encoded in the trnK tRNA gene intron. Probably assists in splicing its own and other chloroplast group II introns. The polypeptide is Maturase K (Cedrus atlantica (Atlas cedar)).